The following is a 169-amino-acid chain: Disulfide bond formation protein B 1 (169 aa).

At 1–14 (MSDNTLYLRREKRF) the chain is on the cytoplasmic side. Residues 15–31 (LVLLGIICLALIGGALY) form a helical membrane-spanning segment. The Periplasmic segment spans residues 32 to 49 (MQIVLGEAPCPLCILQRY). A disulfide bridge connects residues Cys41 and Cys44. Residues 50-64 (ALLFIAIFAFIGAAM) traverse the membrane as a helical segment. Residues 65–71 (SGRRGVT) are Cytoplasmic-facing. The helical transmembrane segment at 72–89 (VCETLVTLSALGGIAAAG) threads the bilayer. The Periplasmic portion of the chain corresponds to 90 to 144 (RHVWILAHPSDSCGIDVLQPIVDGLPLATLFPTGFQVSGFCTTPYPPVLGLSLAQ). Cys102 and Cys130 are joined by a disulfide. Residues 145 to 163 (WALAAFVLTAVLVPACIIR) form a helical membrane-spanning segment. Over 164–169 (NRRKPY) the chain is Cytoplasmic.

Belongs to the DsbB family.

The protein localises to the cell inner membrane. Functionally, required for disulfide bond formation in some periplasmic proteins. Acts by oxidizing the DsbA protein. This is Disulfide bond formation protein B 1 from Pseudomonas savastanoi pv. phaseolicola (strain 1448A / Race 6) (Pseudomonas syringae pv. phaseolicola (strain 1448A / Race 6)).